The sequence spans 819 residues: MSNIQNMSLEDIMGERFGRYSKYIIQERALPDIRDGLKPVQRRILYSMNKDGNTFEKGYRKSAKSVGNIMGNFHPHGDFSIYDAMVRMSQDWKNREILVEMHGNNGSMDGDPPAAMRYTEARLSEIAGYLLQDIEKNTVSFAWNFDDTEKEPTVLPAAFPNLLVNGSSGISAGYATDIPPHNLSEVIDAVVYMIDHPKASLEKLMEFLPGPDFPTGGIIQGADEIKKAYETGKGRVVVRSRTEIEELKGGKQQIIVTEIPYEVNKAVLVKKIDDVRVNNKVPGIVEVRDESDRTGLRIAIELKKEADSQTILNYLLKYTDLQVNYNFNMVAIDHFTPRQVGLQKILSSYISHRKDIIIERSKFDKAKAEKRLHIVEGLIRVLSILDEIIALIRSSDNKADAKENLKVSYDFSEEQAEAIVTLQLYRLTNTDIVTLQNEENDLRDLITTLSAIIGDEATMYNVMKRELREVKKKFANPRLSELQAESQIIEIDTASLIAEEETFVSVTRGGYLKRTSPRSFNASSLEEVGKRDDDELIFVKQAKTTEHLLLFTTLGNVIYRPIHELTDLRWKDIGEHLSQTISNFATEEEILYADIVTSFDQGLYVAVTQNGFIKRFDRKELSPWRTYKSKSTKYVKLKDDKDRVVTLSPVIMEDLLLVTKNGYALRFSSQEVPIQGLKSAGVKGINLKNDDSLASAFAVTSNSFFVLTQRGSLKRMAVDDIPQTSRANRGLLVLRELKTKPHRVFLAGGVQSDTSAEQFDLFTDIPEEETNQQMLEVISKTGQTYEIALETLSLSERTSNGSFISDTISDQEVLVARTR.

The 467-residue stretch at Leu30–Leu496 folds into the Topo IIA-type catalytic domain. Tyr118 serves as the catalytic O-(5'-phospho-DNA)-tyrosine intermediate.

Belongs to the type II topoisomerase GyrA/ParC subunit family. ParC type 2 subfamily. Heterotetramer composed of ParC and ParE.

The protein localises to the cell membrane. The enzyme catalyses ATP-dependent breakage, passage and rejoining of double-stranded DNA.. In terms of biological role, topoisomerase IV is essential for chromosome segregation. It relaxes supercoiled DNA. Performs the decatenation events required during the replication of a circular DNA molecule. This Streptococcus pyogenes serotype M3 (strain SSI-1) protein is DNA topoisomerase 4 subunit A.